Reading from the N-terminus, the 246-residue chain is Peroxisomal membrane protein 11A (246 aa).

The Cytoplasmic portion of the chain corresponds to 1 to 93 (MDAFIRVANQ…LCLTLANLNR (93 aa)). A helical transmembrane segment spans residues 94–114 (VVYYICDTVLWAKSVGLTSGI). At 115–217 (NREKWQMRAA…LNQLGIYKSN (103 aa)) the chain is on the lumenal side. A helical membrane pass occupies residues 218 to 238 (LGVVGFGGLVSSVAGLITVVY). The interval 218–238 (LGVVGFGGLVSSVAGLITVVY) is required for homodimerization, interaction with PEX11G, and peroxisomal localization. Residues 239 to 246 (PQLKLKAR) are Cytoplasmic-facing.

Belongs to the peroxin-11 family. In terms of assembly, homodimer. Heterodimer with PEX11G. Probably interacts with COPB2 and COPA. Interacts with PEX19. Interacts with FIS1. In terms of tissue distribution, expressed at high levels in kidney, liver, lung, brain, and testis and at low levels in heart, spleen and skeletal muscle.

The protein localises to the peroxisome membrane. May be involved in peroxisomal proliferation and may regulate peroxisomes division. May mediate binding of coatomer proteins to the peroxisomal membrane. Promotes membrane protrusion and elongation on the peroxisomal surface. This is Peroxisomal membrane protein 11A (Pex11a) from Rattus norvegicus (Rat).